We begin with the raw amino-acid sequence, 196 residues long: Pantothenic acid transporter PanT (196 aa).

Transmembrane regions (helical) follow at residues 10 to 30, 35 to 55, 58 to 78, 99 to 119, 131 to 151, and 161 to 181; these read AILA…QFVI, FPVK…ILGW, GAFL…IVTT, WGLF…YFVY, AAFA…FLFF, and YLLG…AVIL.

As to quaternary structure, in E.coli forms a stable energy-coupling factor (ECF) transporter complex composed of 2 membrane-embedded substrate-binding protein (S component), 2 ATP-binding proteins (A and A' components) and 2 transmembrane proteins (T component), probably with a stoichiometry of 2:1:1:2. May be able to interact with more than 1 S component at a time.

It localises to the cell membrane. In terms of biological role, probably a pantothenic acid-binding protein that interacts with the energy-coupling factor (ECF) ABC-transporter complex. Unlike classic ABC transporters this ECF transporter provides the energy necessary to transport a number of different substrates. The substrates themselves are bound by transmembrane, not extracytoplasmic soluble proteins. The polypeptide is Pantothenic acid transporter PanT (panT) (Lactococcus lactis subsp. cremoris (strain MG1363)).